The sequence spans 430 residues: tRNA(Ile)-lysidine synthase (430 aa).

21-26 (SGGLDS) serves as a coordination point for ATP.

Belongs to the tRNA(Ile)-lysidine synthase family.

It localises to the cytoplasm. The catalysed reaction is cytidine(34) in tRNA(Ile2) + L-lysine + ATP = lysidine(34) in tRNA(Ile2) + AMP + diphosphate + H(+). Ligates lysine onto the cytidine present at position 34 of the AUA codon-specific tRNA(Ile) that contains the anticodon CAU, in an ATP-dependent manner. Cytidine is converted to lysidine, thus changing the amino acid specificity of the tRNA from methionine to isoleucine. This is tRNA(Ile)-lysidine synthase from Salmonella newport (strain SL254).